Here is a 118-residue protein sequence, read N- to C-terminus: Large ribosomal subunit protein uL24c (118 aa).

The protein belongs to the universal ribosomal protein uL24 family. In terms of assembly, part of the 50S ribosomal subunit.

Its subcellular location is the plastid. The protein resides in the organellar chromatophore. Functionally, one of two assembly initiator proteins, it binds directly to the 5'-end of the 23S rRNA, where it nucleates assembly of the 50S subunit. This is Large ribosomal subunit protein uL24c (rpl24) from Paulinella chromatophora.